Reading from the N-terminus, the 319-residue chain is sn-1-specific diacylglycerol lipase ABHD11 (319 aa).

Residues 1–28 (MTLKLAVLRQIFQGSKGWHLWQHWRAFY) constitute a mitochondrion transit peptide. In terms of domain architecture, AB hydrolase-1 spans 69–304 (PPLVLLHGLF…GAGHWVHADK (236 aa)). Active-site charge relay system residues include Ser-143, Glu-239, and His-298.

Belongs to the AB hydrolase superfamily. Phosphorylated.

The protein localises to the mitochondrion. The protein resides in the mitochondrion matrix. The catalysed reaction is 1-octadecanoyl-2-(5Z,8Z,11Z,14Z-eicosatetraenoyl)-sn-glycerol + H2O = 2-(5Z,8Z,11Z,14Z-eicosatetraenoyl)-glycerol + octadecanoate + H(+). It carries out the reaction a 1,2-diacyl-sn-glycerol + H2O = a 2-acylglycerol + a fatty acid + H(+). It catalyses the reaction a 1,3-diacyl-sn-glycerol + H2O = a 1-acyl-sn-glycerol + a fatty acid + H(+). The enzyme catalyses 1-octadecanoyl-2-(9Z-octadecenoyl)-sn-glycerol + H2O = 2-(9Z-octadecenoyl)-glycerol + octadecanoate + H(+). The catalysed reaction is 1-octadecanoyl-2-(4Z,7Z,10Z,13Z,16Z,19Z-docosahexaenoyl)-sn-glycerol + H2O = 2-(4Z,7Z,10Z,13Z,16Z,19Z-docosahexaenoyl)-glycerol + octadecanoate + H(+). It carries out the reaction 1,2-didecanoylglycerol + H2O = decanoylglycerol + decanoate + H(+). Its function is as follows. Catalyzes the hydrolysis of diacylglycerol in vitro and may function as a key regulator in lipid metabolism, namely by regulating the intracellular levels of diacylglycerol. 1,2-diacyl-sn-glycerols are the preferred substrate over 1,3-diacyl-sn-glycerols. The enzyme hydrolyzes stearate in preference to palmitate from the sn-1 position of 1,2-diacyl-sn-glycerols. This is sn-1-specific diacylglycerol lipase ABHD11 from Xenopus tropicalis (Western clawed frog).